The sequence spans 176 residues: Centromere protein R (176 aa).

Lys-8 participates in a covalent cross-link: Glycyl lysine isopeptide (Lys-Gly) (interchain with G-Cter in SUMO2). Ser-17 is modified (phosphoserine). A DD1 region spans residues 20–50 (PSKIMRKKSITAFSPTTGTYQLSPFSSPRTP). Lys-22 participates in a covalent cross-link: Glycyl lysine isopeptide (Lys-Gly) (interchain with G-Cter in SUMO2). Ser-28 is modified (phosphoserine). Residues 34 to 48 (PTTGTYQLSPFSSPR) show a composition bias toward polar residues. The interval 34–80 (PTTGTYQLSPFSSPRTPKEQEHRDGPSNGTRKWSVLSSPARQDSTVK) is disordered. A compositionally biased stretch (basic and acidic residues) spans 49 to 58 (TPKEQEHRDG). A compositionally biased stretch (polar residues) spans 60 to 80 (SNGTRKWSVLSSPARQDSTVK). A Nuclear localization signal motif is present at residues 63–66 (TRKW). Position 71 is a phosphoserine (Ser-71). The stretch at 82 to 112 (SDGFMMLLSKIERSSEKTMEIMKNLSSLQAL) forms a coiled coil. Positions 118 to 122 (LEDLL) match the LXXLL motif motif. Residues 171–175 (LKAIL) carry the LXXIL motif motif.

As to quaternary structure, homodimer; mediated by the coiled coil domain. Interacts with CCNA2 and MTA1. Interacts with NFKB1 NF-kappa-B subunit. Component of the CENPA-CAD complex, composed of CENPI, CENPK, CENPL, CENPO, CENPP, CENPQ, CENPR and CENPS. The CENPA-CAD complex interacts with the CENPA-NAC complex, at least composed of CENPA, CENPC, CENPH, CENPM, CENPN, CENPT and CENPU. Interacts with TASOR.

Its subcellular location is the nucleus. It is found in the chromosome. The protein localises to the centromere. It localises to the kinetochore. Transcription coregulator that can have both coactivator and corepressor functions. Involved in the coactivation of nuclear receptors for retinoid X (RXRs) and thyroid hormone (TRs) in a ligand-dependent fashion. In contrast, it does not coactivate nuclear receptors for retinoic acid, vitamin D, progesterone receptor, nor glucocorticoid. Acts as a coactivator for estrogen receptor alpha. Acts as a transcriptional corepressor via its interaction with the NFKB1 NF-kappa-B subunit, possibly by interfering with the transactivation domain of NFKB1. Induces apoptosis in breast cancer cells, but not in other cancer cells, via a caspase-2 mediated pathway that involves mitochondrial membrane permeabilization but does not require other caspases. May also act as an inhibitor of cyclin A-associated kinase. Also acts a component of the CENPA-CAD (nucleosome distal) complex, a complex recruited to centromeres which is involved in assembly of kinetochore proteins, mitotic progression and chromosome segregation. May be involved in incorporation of newly synthesized CENPA into centromeres via its interaction with the CENPA-NAC complex. The polypeptide is Centromere protein R (Itgb3bp) (Rattus norvegicus (Rat)).